The sequence spans 620 residues: Threonine--tRNA ligase (620 aa).

The TGS domain occupies 1–42; sequence MFEIAKGISNSLAKKSVGAKVDGKNVDMSYILDHDAEVEFID. The interval 224–515 is catalytic; the sequence is DHRKLGKELE…LIEHYAGAFP (292 aa). C315, H366, and H492 together coordinate Zn(2+).

It belongs to the class-II aminoacyl-tRNA synthetase family. Homodimer. Zn(2+) is required as a cofactor.

The protein localises to the cytoplasm. The catalysed reaction is tRNA(Thr) + L-threonine + ATP = L-threonyl-tRNA(Thr) + AMP + diphosphate + H(+). Its function is as follows. Catalyzes the attachment of threonine to tRNA(Thr) in a two-step reaction: L-threonine is first activated by ATP to form Thr-AMP and then transferred to the acceptor end of tRNA(Thr). Also edits incorrectly charged L-seryl-tRNA(Thr). The chain is Threonine--tRNA ligase from Fusobacterium nucleatum subsp. nucleatum (strain ATCC 25586 / DSM 15643 / BCRC 10681 / CIP 101130 / JCM 8532 / KCTC 2640 / LMG 13131 / VPI 4355).